Here is a 530-residue protein sequence, read N- to C-terminus: Sensor protein kinase PilS (530 aa).

6 helical membrane-spanning segments follow: residues L25–S37, W57–L70, L76–G98, P101–L119, G124–L144, and A156–V174. Over R175–S530 the chain is Cytoplasmic. The PAS domain maps to E196–R260. Residues G316–R527 enclose the Histidine kinase domain. Residue H319 is modified to Phosphohistidine; by autocatalysis.

As to quaternary structure, interacts with PilA.

It localises to the cell inner membrane. The enzyme catalyses ATP + protein L-histidine = ADP + protein N-phospho-L-histidine.. Member of the two-component regulatory system PilS/PilR that regulates the expression of multiple genes including the type IV pilus (T4P) major subunit PilA. Thereby, plays a major role in the regulation of multiple motility pathways. Functions as a membrane-associated protein kinase that phosphorylates PilR in response to environmental signals leading to activation of specific gene promoters including the pilin gene. The protein is Sensor protein kinase PilS (pilS) of Pseudomonas aeruginosa (strain ATCC 15692 / DSM 22644 / CIP 104116 / JCM 14847 / LMG 12228 / 1C / PRS 101 / PAO1).